The chain runs to 317 residues: L-lactate dehydrogenase 1 (317 aa).

NAD(+) contacts are provided by residues Val-17, Asp-38, Lys-43, Tyr-69, and 83-84 (GA). Substrate is bound by residues Gln-86 and Arg-92. Residues Ser-105, 122 to 124 (ATN), and Ser-147 each bind NAD(+). Position 124–127 (124–127 (NPVD)) interacts with substrate. Position 152–155 (152–155 (DSAR)) interacts with substrate. The active-site Proton acceptor is the His-179. Tyr-223 bears the Phosphotyrosine mark. A substrate-binding site is contributed by Thr-232.

The protein belongs to the LDH/MDH superfamily. LDH family. In terms of assembly, homotetramer.

The protein localises to the cytoplasm. The enzyme catalyses (S)-lactate + NAD(+) = pyruvate + NADH + H(+). It participates in fermentation; pyruvate fermentation to lactate; (S)-lactate from pyruvate: step 1/1. In terms of biological role, catalyzes the conversion of lactate to pyruvate (Potential). Appears to be the primary factor that allows S.aureus growth during nitrosative stress in both aerobically and anaerobically cultured cells. This is L-lactate dehydrogenase 1 from Staphylococcus aureus (strain bovine RF122 / ET3-1).